A 255-amino-acid chain; its full sequence is Dehydrogenase/reductase SDR family member 11 (255 aa).

An N-terminal signal peptide occupies residues 1–25 (MERWRDRLALVTGASGGIGAAVARA). Residues 13 to 18 (GASGGI), 38 to 39 (RT), Glu44, 65 to 66 (DL), and Asn92 each bind NADP(+). Positions 146 and 161 each coordinate substrate. Residues Tyr161, Lys165, 196–199 (VETQ), and Lys203 each bind NADP(+). The active-site Proton acceptor is Tyr161.

The protein belongs to the short-chain dehydrogenases/reductases (SDR) family.

It localises to the secreted. The catalysed reaction is a 3beta-hydroxysteroid + NADP(+) = a 3-oxosteroid + NADPH + H(+). It catalyses the reaction 17beta-estradiol + NAD(+) = estrone + NADH + H(+). It carries out the reaction 17beta-estradiol + NADP(+) = estrone + NADPH + H(+). The protein operates within steroid biosynthesis; estrogen biosynthesis. Its activity is regulated as follows. Inhibited by flavonoids including apigenin, luteolin, genistein, kaempferol and quercetin and also by carbenoxolone, zearalenone, glycyrrhetinic, curcumin and flufenamic acid. Its function is as follows. Catalyzes the conversion of the 17-keto group of estrone, 4- and 5-androstenes and 5-alpha-androstanes into their 17-beta-hydroxyl metabolites and the conversion of the 3-keto group of 3-, 3,17- and 3,20- diketosteroids into their 3-hydroxyl metabolites. Exhibits reductive 3-beta-hydroxysteroid dehydrogenase activity toward 5-beta-androstanes, 5-beta-pregnanes, 4-pregnenes and bile acids. May also reduce endogenous and exogenous alpha-dicarbonyl compounds and xenobiotic alicyclic ketones. This Bos taurus (Bovine) protein is Dehydrogenase/reductase SDR family member 11 (DHRS11).